The sequence spans 195 residues: Inner membrane-spanning protein YciB (195 aa).

Transmembrane regions (helical) follow at residues 34–54 (IYGATATLILASVIVYGALWL), 65–85 (FTLGACLVLGGLTLAFHEDTF), 88–108 (WKAPLVNWLFALAFAGSHFIG), 131–151 (LNIAWVVFFLVCGFANLYVVF), and 160–180 (FKVFGSLGMTLLFLIGQGIFL).

It belongs to the YciB family.

The protein localises to the cell inner membrane. Plays a role in cell envelope biogenesis, maintenance of cell envelope integrity and membrane homeostasis. In Pseudomonas paraeruginosa (strain DSM 24068 / PA7) (Pseudomonas aeruginosa (strain PA7)), this protein is Inner membrane-spanning protein YciB.